Reading from the N-terminus, the 71-residue chain is UPF0346 protein Sez_1447 (71 aa).

The protein belongs to the UPF0346 family.

The protein is UPF0346 protein Sez_1447 of Streptococcus equi subsp. zooepidemicus (strain MGCS10565).